A 176-amino-acid polypeptide reads, in one-letter code: Adenine phosphoribosyltransferase (176 aa).

The protein belongs to the purine/pyrimidine phosphoribosyltransferase family. As to quaternary structure, homodimer.

It is found in the cytoplasm. The enzyme catalyses AMP + diphosphate = 5-phospho-alpha-D-ribose 1-diphosphate + adenine. Its pathway is purine metabolism; AMP biosynthesis via salvage pathway; AMP from adenine: step 1/1. Catalyzes a salvage reaction resulting in the formation of AMP, that is energically less costly than de novo synthesis. The polypeptide is Adenine phosphoribosyltransferase (Bacteroides thetaiotaomicron (strain ATCC 29148 / DSM 2079 / JCM 5827 / CCUG 10774 / NCTC 10582 / VPI-5482 / E50)).